A 923-amino-acid polypeptide reads, in one-letter code: Leucine--tRNA ligase (923 aa).

Positions 41–52 (PYPSGEGLHVGH) match the 'HIGH' region motif. Positions 698–702 (KMSKS) match the 'KMSKS' region motif. Residue lysine 701 coordinates ATP.

This sequence belongs to the class-I aminoacyl-tRNA synthetase family.

The protein localises to the cytoplasm. It catalyses the reaction tRNA(Leu) + L-leucine + ATP = L-leucyl-tRNA(Leu) + AMP + diphosphate. The chain is Leucine--tRNA ligase from Amoebophilus asiaticus (strain 5a2).